The chain runs to 242 residues: Small ribosomal subunit protein uS2 (242 aa).

Belongs to the universal ribosomal protein uS2 family.

In Vibrio parahaemolyticus serotype O3:K6 (strain RIMD 2210633), this protein is Small ribosomal subunit protein uS2.